Here is a 373-residue protein sequence, read N- to C-terminus: UDP-glucose 4-epimerase 3 (373 aa).

27–58 (SVLVTGGAGYIGTHTVLRLLEKGFAVTVVDNF) is an NAD(+) binding site. A substrate-binding site is contributed by serine 153. Tyrosine 177 serves as the catalytic Proton acceptor.

It belongs to the NAD(P)-dependent epimerase/dehydratase family. NAD(+) is required as a cofactor.

The catalysed reaction is UDP-alpha-D-glucose = UDP-alpha-D-galactose. The protein operates within carbohydrate metabolism; galactose metabolism. Functionally, catalyzes the interconversion between UDP-glucose and UDP-galactose. This Oryza sativa subsp. japonica (Rice) protein is UDP-glucose 4-epimerase 3 (UGE-3).